Here is a 285-residue protein sequence, read N- to C-terminus: MATKLQDGNTPCLAATPSEPRPTVLVFDSGVGGLSVYDEIRHLLPDLHYIYAFDNVAFPYGEKSEEFIVERVVAIVTAVQERYPLALAVVACNTASTVSLPALREKFDFPVVGVVPAIKPAARLTANGIVGLLATRGTVKRSYTHELIARFANECQIEMLGSAEMVELAEAKLHGEDVSLDALKRILRPWLRMKEPPDTVVLGCTHFPLLQEELLQVLPEGTRLVDSGAAIARRTAWLLEHEAPDAKSADANIAFCMAMTPEAEQLLPVLQRYGFETLEKLAVLG.

Residues 28–29 (DS) and 60–61 (YG) contribute to the substrate site. Cys92 acts as the Proton donor/acceptor in catalysis. A substrate-binding site is contributed by 93–94 (NT). The active-site Proton donor/acceptor is the Cys204. 205–206 (TH) contributes to the substrate binding site.

The protein belongs to the aspartate/glutamate racemases family.

The enzyme catalyses L-glutamate = D-glutamate. Its pathway is cell wall biogenesis; peptidoglycan biosynthesis. Its function is as follows. Provides the (R)-glutamate required for cell wall biosynthesis. This is Glutamate racemase from Escherichia coli O9:H4 (strain HS).